The following is a 265-amino-acid chain: Histidine racemase (265 aa).

The Proton acceptor role is filled by cysteine 67. The Proton donor role is filled by cysteine 209.

The protein belongs to the histidine racemase family. In terms of assembly, homodimer.

It catalyses the reaction L-histidine = D-histidine. Its activity is regulated as follows. Activity is not affected by buffer composition (PO(4) or Tris), ions (SO(4)(2-), Mg(2+) and EDTA) or the PLP inhibitor hydroxylamine. However, the activity is hindered by iodoacetamide and Hg(2+), which are known inhibitors of enzymes with catalytic thiols. In terms of biological role, cofactor-independent isomerase that catalyzes the reversible conversion of L-histidine to D-histidine. Shows weak activity with L,L-lanthionine. The catalytic turnover is 10'000-fold faster with L-histidine than with L,L-lanthionine. May play a role in growth of F.nucleatum. The chain is Histidine racemase from Fusobacterium nucleatum subsp. nucleatum (strain ATCC 25586 / DSM 15643 / BCRC 10681 / CIP 101130 / JCM 8532 / KCTC 2640 / LMG 13131 / VPI 4355).